A 542-amino-acid chain; its full sequence is Valine N-monooxygenase 1 (542 aa).

The Cytoplasmic segment spans residues Met-1–Ser-21. A helical; Signal-anchor for type II membrane protein membrane pass occupies residues Ser-22–Val-42. At Lys-43 to Pro-542 the chain is on the lumenal side. Residue Asn-278 is glycosylated (N-linked (GlcNAc...) asparagine). Cys-478 is a heme binding site. N-linked (GlcNAc...) asparagine glycosylation occurs at Asn-506.

This sequence belongs to the cytochrome P450 family. Requires heme as cofactor. In terms of tissue distribution, expressed in the epidermis, the next two cortex cell layers, the endodermis and the pericycle of leaf petioles. Strong expression around the laticifers among the phloem cells and in parenchymatic cells between the protoxylem and the metaxylem cells. In the leaves, preferentially expressed in the mesophyll cells adjacent to the epidermis.

Its subcellular location is the microsome membrane. The enzyme catalyses L-valine + 2 reduced [NADPH--hemoprotein reductase] + 2 O2 = (E)-2-methylpropanal oxime + 2 oxidized [NADPH--hemoprotein reductase] + CO2 + 3 H2O + 2 H(+). It carries out the reaction L-valine + reduced [NADPH--hemoprotein reductase] + O2 = N-hydroxy-L-valine + oxidized [NADPH--hemoprotein reductase] + H2O + 2 H(+). The catalysed reaction is N-hydroxy-L-valine + reduced [NADPH--hemoprotein reductase] + O2 = N,N-dihydroxy-L-valine + oxidized [NADPH--hemoprotein reductase] + H2O + H(+). It catalyses the reaction L-isoleucine + 2 reduced [NADPH--hemoprotein reductase] + 2 O2 = (1E,2S)-2-methylbutanal oxime + 2 oxidized [NADPH--hemoprotein reductase] + CO2 + 3 H2O + 2 H(+). The enzyme catalyses L-isoleucine + reduced [NADPH--hemoprotein reductase] + O2 = N-hydroxy-L-isoleucine + oxidized [NADPH--hemoprotein reductase] + H2O + 2 H(+). It carries out the reaction N-hydroxy-L-isoleucine + reduced [NADPH--hemoprotein reductase] + O2 = N,N-dihydroxy-L-isoleucine + oxidized [NADPH--hemoprotein reductase] + H2O + H(+). It participates in secondary metabolite biosynthesis. Its activity is regulated as follows. Inhibited by tetcyclasis but not by 1-aminobenzotriazole (ABT). Functionally, involved in the biosynthesis of the cyanogenic glucosides linamarin and lotaustralin. Can use L-valine or L-isoleucine as substrate, but not L-leucine, L-phenylalanine, L-tyrosine, D-valine or D-isoleucine. Catalyzes multi-step reactions starting with two successive N-hydroxylations using L-valine and L-isoleucine as substrates leading to the formation of N,N-dihydroxy-L-valine and N,N-dihydroxy-L-isoleucine, respectively; following spontaneous reactions lead to the production of (E)-2-methylpropanal oxime and (1E,2S)-2-methylbutanal oxime, respectively. The sequence is that of Valine N-monooxygenase 1 from Manihot esculenta (Cassava).